Consider the following 127-residue polypeptide: Cyclin-dependent kinase 2-associated protein 2 (127 aa).

Residues 1–49 are disordered; it reads MSYKPIAPAPSSTPGSSTPGPGTPVPTAGSVPSPSGSVPGAAGPFRPLF. Over residues 9 to 44 the composition is skewed to low complexity; sequence APSSTPGSSTPGPGTPVPTAGSVPSPSGSVPGAAGP. Residues 65-107 are interaction with CDK2; sequence PPGAQGSQSTYTDLLSVIEEMGKEIRPTYAGSKSAMERLKRGI.

It belongs to the CDK2AP family. As to quaternary structure, component of the nucleosome remodeling and deacetylase (NuRD) repressor complex, composed of core proteins MTA1, MTA2, MTA3, RBBP4, RBBP7, HDAC1, HDAC2, MBD2, MBD3, and peripherally associated proteins CDK2AP1, CDK2AP2, GATAD2A, GATAD2B, CHD3, CHD4 and CHD5. The exact stoichiometry of the NuRD complex is unknown, and some subunits such as MBD2 and MBD3, GATAD2A and GATAD2B, and CHD3, CHD4 and CHD5 define mutually exclusive NuRD complexes. Interacts with CDK2AP1. Interacts with CDK2. Interacts with MAPK1. Phosphorylated by MAPK1 and CDK2.

The protein localises to the cytoplasm. It localises to the nucleus. Functionally, acts as a component of the histone deacetylase NuRD complex which participates in the remodeling of chromatin. Inhibits cell cycle G1/S phase transition by repressing CDK2 expression and activation; represses CDK2 activation by inhibiting its interaction with cyclin E and A. Plays a role in regulating the self-renewal of embryonic stem cells (ESCs) and in maintaining cell survival during terminal differentiation of ESCs. Regulates microtubule organization of metaphase II oocytes. This Bos taurus (Bovine) protein is Cyclin-dependent kinase 2-associated protein 2 (CDK2AP2).